The primary structure comprises 99 residues: Co-chaperonin GroES (99 aa).

This sequence belongs to the GroES chaperonin family. As to quaternary structure, heptamer of 7 subunits arranged in a ring. Interacts with the chaperonin GroEL.

The protein localises to the cytoplasm. Its function is as follows. Together with the chaperonin GroEL, plays an essential role in assisting protein folding. The GroEL-GroES system forms a nano-cage that allows encapsulation of the non-native substrate proteins and provides a physical environment optimized to promote and accelerate protein folding. GroES binds to the apical surface of the GroEL ring, thereby capping the opening of the GroEL channel. The chain is Co-chaperonin GroES from Corynebacterium kroppenstedtii (strain DSM 44385 / JCM 11950 / CIP 105744 / CCUG 35717).